Reading from the N-terminus, the 255-residue chain is Putative ankyrin repeat protein R880 (255 aa).

ANK repeat units follow at residues S79–Y109, K110–T139, D141–K169, R171–S199, and K201–V229.

The sequence is that of Putative ankyrin repeat protein R880 from Acanthamoeba polyphaga (Amoeba).